Reading from the N-terminus, the 148-residue chain is Glyoxalase domain-containing protein 5 (148 aa).

Residues 25–145 (RLDHIVMTVK…DRNLLEVSSY (121 aa)) enclose the VOC domain.

This sequence belongs to the glyoxalase I family.

This is Glyoxalase domain-containing protein 5 (Glod5) from Mus musculus (Mouse).